Reading from the N-terminus, the 1268-residue chain is SR-related and CTD-associated factor 8 (1268 aa).

Positions 1-139 constitute a CID domain; that stretch reads MEAVKTFNSE…PLLDMAAGIP (139 aa). Thr-6 is subject to Phosphothreonine. Residue Lys-18 forms a Glycyl lysine isopeptide (Lys-Gly) (interchain with G-Cter in SUMO1) linkage. A compositionally biased stretch (basic and acidic residues) spans 270–283; sequence GEDSEHSEESKKEM. 3 disordered regions span residues 270 to 290, 322 to 355, and 385 to 469; these read GEDSEHSEESKKEMPTPQLSH, QQQPQKVTPQDSQEGTFGSEHSASPSQGSSQQHF, and EIFE…PVRS. Ser-273 is modified (phosphoserine). Residues 327-354 are compositionally biased toward polar residues; that stretch reads KVTPQDSQEGTFGSEHSASPSQGSSQQH. The segment covering 394 to 443 has biased composition (basic residues); it reads VAVRSRSRTHSRSRSRSPRKRRSRSRSGSRKRKHRKRSRSHSREKKRKAS. A compositionally biased stretch (basic and acidic residues) spans 447–461; it reads SSERRAREREKERQK. The RRM domain maps to 477–551; that stretch reads TTLWVGQVDK…KVIKIAWALN (75 aa). Ser-617 carries the post-translational modification Phosphoserine. The tract at residues 776–807 is disordered; that stretch reads QIPSGENTRPVIPSDIPSSAAMLAQPPGASST. Asymmetric dimethylarginine occurs at positions 915, 925, and 936. Disordered regions lie at residues 984–1012 and 1040–1065; these read PGRPSIDNVPNPDKRIPLGNDNIQQEGDR and RLDPREGPGRPPLDARDHFGRPPVDM. The residue at position 1071 (Arg-1071) is an Asymmetric dimethylarginine. The segment at 1199-1268 is disordered; that stretch reads ATSQRKGDNV…VVESTETEGT (70 aa). A compositionally biased stretch (low complexity) spans 1249–1262; the sequence is GTVAGVESEAVVES.

Interacts with POLR2A; via C-terminal heptapeptide repeat domain (CTD) phosphorylated at 'Ser-2' and 'Ser-5'. Identified in a complex with CDC5L and other spliceosomal proteins.

It is found in the nucleus. Its subcellular location is the nucleus matrix. Anti-terminator protein required to prevent early mRNA termination during transcription. Together with SCAF4, acts by suppressing the use of early, alternative poly(A) sites, thereby preventing the accumulation of non-functional truncated proteins. Mechanistically, associates with the phosphorylated C-terminal heptapeptide repeat domain (CTD) of the largest RNA polymerase II subunit (POLR2A), and subsequently binds nascent RNA upstream of early polyadenylation sites to prevent premature mRNA transcript cleavage and polyadenylation. Independently of SCAF4, also acts as a positive regulator of transcript elongation. In Mus musculus (Mouse), this protein is SR-related and CTD-associated factor 8.